Reading from the N-terminus, the 306-residue chain is Ribonuclease H2 subunit B (306 aa).

Residues 232–285 (LPDLSSPTPEPPVKKRRVSDAPVEADEDYTKYNSDNKSRKSNSKMTAAQKSLAK) form a disordered region. Positions 259-269 (DYTKYNSDNKS) are enriched in basic and acidic residues.

The protein belongs to the RNase H2 subunit B family. In terms of assembly, the RNase H2 complex is a heterotrimer composed of the catalytic subunit RNASEH2A and the non-catalytic subunits RNASEH2B and RNASEH2C.

The protein localises to the nucleus. Non catalytic subunit of RNase H2, an endonuclease that specifically degrades the RNA of RNA:DNA hybrids. Participates in DNA replication, possibly by mediating the removal of lagging-strand Okazaki fragment RNA primers during DNA replication. Mediates the excision of single ribonucleotides from DNA:RNA duplexes. The sequence is that of Ribonuclease H2 subunit B (rnaseh2b) from Xenopus laevis (African clawed frog).